A 151-amino-acid polypeptide reads, in one-letter code: Cysteine proteinase inhibitor 10 (151 aa).

The N-terminal stretch at 1–22 is a signal peptide; the sequence is MATSPMLFLVSLLLVLVAAATG. The Cystatin domain maps to 40 to 109; sequence GGRTEIRDVG…GVAYYLKVAA (70 aa). A Secondary area of contact motif is present at residues 96–100; the sequence is QVVSG.

This sequence belongs to the cystatin family. Phytocystatin subfamily.

The protein localises to the secreted. Its function is as follows. Specific inhibitor of cysteine proteinases. Probably involved in the regulation of endogenous processes and in defense against pests and pathogens. The sequence is that of Cysteine proteinase inhibitor 10 from Oryza sativa subsp. indica (Rice).